The following is a 410-amino-acid chain: WD repeat and FYVE domain-containing protein 1 (410 aa).

6 WD repeats span residues 22-61 (GHQD…QYWP), 66-105 (TMAS…NKMN), 112-150 (AHQN…NMLG), 153-192 (FFTS…CSVI), 197-236 (GHEG…GRTL), and 240-279 (GHHD…EEAP). The FYVE-type zinc-finger motif lies at 281 to 352 (WLESDSCQKC…VCDSCYDSIK (72 aa)). Zn(2+) is bound by residues Cys-287, Cys-290, Cys-314, Cys-317, Cys-322, Cys-325, Cys-344, and Cys-347. The WD 7 repeat unit spans residues 364-403 (EGKHNISHMSMDIARGLMVTCGTDRIVKIWDMTPVVGCSL). Ser-408 bears the Phosphoserine mark.

As to quaternary structure, binds PtdIns3P in vitro with high specificity over other phosphoinositides. Interacts (via WD repeat 2) with tyrosine-phosphorylated TLR3 (via TIR domain) in response to poly(I:C). Interacts with TICAM1 in response to poly(I:C). Interacts with TLR4 in response to LPS.

Its subcellular location is the early endosome. In terms of biological role, positively regulates TLR3- and TLR4-mediated signaling pathways by bridging the interaction between TLR3 or TLR4 and TICAM1. Promotes TLR3/4 ligand-induced activation of transcription factors IRF3 and NF-kappa-B, as well as the production of IFN-beta and inflammatory cytokines. The polypeptide is WD repeat and FYVE domain-containing protein 1 (WDFY1) (Homo sapiens (Human)).